The chain runs to 153 residues: 6,7-dimethyl-8-ribityllumazine synthase (153 aa).

5-amino-6-(D-ribitylamino)uracil contacts are provided by residues Phe-21, 55–57 (AFE), and 79–81 (TVI). Residue 84-85 (AT) coordinates (2S)-2-hydroxy-3-oxobutyl phosphate. The Proton donor role is filled by His-87. Phe-112 is a binding site for 5-amino-6-(D-ribitylamino)uracil. A (2S)-2-hydroxy-3-oxobutyl phosphate-binding site is contributed by Arg-126.

This sequence belongs to the DMRL synthase family. In terms of assembly, forms an icosahedral capsid composed of 60 subunits, arranged as a dodecamer of pentamers.

It carries out the reaction (2S)-2-hydroxy-3-oxobutyl phosphate + 5-amino-6-(D-ribitylamino)uracil = 6,7-dimethyl-8-(1-D-ribityl)lumazine + phosphate + 2 H2O + H(+). The protein operates within cofactor biosynthesis; riboflavin biosynthesis; riboflavin from 2-hydroxy-3-oxobutyl phosphate and 5-amino-6-(D-ribitylamino)uracil: step 1/2. Functionally, catalyzes the formation of 6,7-dimethyl-8-ribityllumazine by condensation of 5-amino-6-(D-ribitylamino)uracil with 3,4-dihydroxy-2-butanone 4-phosphate. This is the penultimate step in the biosynthesis of riboflavin. This chain is 6,7-dimethyl-8-ribityllumazine synthase, found in Bacillus cereus (strain ATCC 10987 / NRS 248).